The sequence spans 922 residues: Histidine kinase 5 (922 aa).

2 coiled-coil regions span residues 86–120 and 169–205; these read MQDN…EEYK and KQKA…SQSA. A Histidine kinase domain is found at 373 to 614; it reads TMSHEIRSPL…TFTFILPYKV (242 aa). A Phosphohistidine; by autocatalysis modification is found at His376. Disordered regions lie at residues 620–639 and 728–773; these read YSDD…EPDD and NGRC…TEVK. Low complexity predominate over residues 738-747; sequence SCSSSQASSE. The span at 761–773 shows a compositional bias: basic and acidic residues; the sequence is SHREEEKAETEVK. A Response regulatory domain is found at 779 to 921; that stretch reads KILLVEDNKI…KLRECLQQYL (143 aa). Mg(2+) contacts are provided by Asp785, Asp828, and Cys830. Asp828 is modified (4-aspartylphosphate).

Interacts with AHP1, APH2, APH3, APH5 and APH6, but not with APH4. Present in light-grown but not in etiolated seedlings. Mostly expressed in roots flowers and siliques, and, to a lower extent, in stems and leaves, especially in guard cells.

It localises to the cell membrane. The protein resides in the cytoplasm. The enzyme catalyses ATP + protein L-histidine = ADP + protein N-phospho-L-histidine.. Functionally, functions as a histidine kinase and transmits the stress signal to a downstream MAPK cascade. This protein undergoes an ATP-dependent autophosphorylation at a conserved histidine residue in the kinase core, and a phosphoryl group is then transferred to a conserved aspartate residue in the receiver domain. Negative regulator of the ETR1-dependent abscisic acid (ABA) and ethylene signaling pathway that inhibits the root elongation. Promotes stomatal closure. Regulates stomatal opening by integrating multiple signals via hydrogen peroxide H(2)O(2) homeostasis in guard cells in an ABA-independent manner. May contribute to basal defense mechanisms by closing stomata in the presence of bacterial pathogens. Regulates both hormone levels and ROS production in response to stress. Required for full immunity to bacterial pathogen and necrotrophic fungus. The polypeptide is Histidine kinase 5 (AHK5) (Arabidopsis thaliana (Mouse-ear cress)).